The sequence spans 502 residues: L-arabinose isomerase (502 aa).

Glutamate 306, glutamate 333, histidine 350, and histidine 449 together coordinate Mn(2+).

This sequence belongs to the arabinose isomerase family. Requires Mn(2+) as cofactor.

The enzyme catalyses beta-L-arabinopyranose = L-ribulose. Its pathway is carbohydrate degradation; L-arabinose degradation via L-ribulose; D-xylulose 5-phosphate from L-arabinose (bacterial route): step 1/3. Functionally, catalyzes the conversion of L-arabinose to L-ribulose. The sequence is that of L-arabinose isomerase from Flavobacterium johnsoniae (strain ATCC 17061 / DSM 2064 / JCM 8514 / BCRC 14874 / CCUG 350202 / NBRC 14942 / NCIMB 11054 / UW101) (Cytophaga johnsonae).